Consider the following 179-residue polypeptide: Diphosphoinositol polyphosphate phosphohydrolase 2 (179 aa).

Residues arginine 9, 17-19 (KKR), and 38-40 (SSR) contribute to the substrate site. The Nudix hydrolase domain occupies 17–143 (KKRAACLCFR…VHAEYLEKLK (127 aa)). Positions 49 and 65 each coordinate Mg(2+). Positions 50–71 (GGMEPEEEPGGAAVREVYEEAG) match the Nudix box motif. The Proton acceptor role is filled by glutamate 68. Position 69 (glutamate 69) interacts with Mg(2+). Substrate is bound by residues 88-90 (RKH), arginine 114, and lysine 132.

This sequence belongs to the Nudix hydrolase family. DIPP subfamily. The cofactor is Mg(2+). Requires Mn(2+) as cofactor.

Its subcellular location is the cytoplasm. It carries out the reaction diphospho-myo-inositol polyphosphate + H2O = myo-inositol polyphosphate + phosphate.. The catalysed reaction is 5-diphospho-1D-myo-inositol 1,2,3,4,6-pentakisphosphate + H2O = 1D-myo-inositol hexakisphosphate + phosphate + H(+). The enzyme catalyses 3,5-bis(diphospho)-1D-myo-inositol 1,2,4,6-tetrakisphosphate + H2O = 3-diphospho-1D-myo-inositol 1,2,4,5,6-pentakisphosphate + phosphate + 2 H(+). It catalyses the reaction 5-diphospho-1D-myo-inositol 1,3,4,6-tetrakisphosphate + H2O = 1D-myo-inositol 1,3,4,5,6-pentakisphosphate + phosphate + H(+). It carries out the reaction P(1),P(6)-bis(5'-adenosyl) hexaphosphate + H2O = 2 ATP + 2 H(+). The catalysed reaction is P(1),P(5)-bis(5'-adenosyl) pentaphosphate + H2O = ADP + ATP + 2 H(+). The enzyme catalyses 5-phospho-alpha-D-ribose 1-diphosphate + H2O = alpha-D-ribose 1,5-bisphosphate + phosphate + H(+). In terms of biological role, cleaves the beta-phosphate from diphosphoinositol polyphosphates such as PP-InsP5 (diphosphoinositol pentakisphosphate), PP-InsP4 (diphosphoinositol tetrakisphosphate) and [PP]2-InsP4 (bisdiphosphoinositol tetrakisphosphate), suggesting that it may play a role in signal transduction. Diadenosine polyphosphates, particularly Ap6A (P(1),P(6)-bis(5a-adenosyl) hexaphosphate) and Ap5A (P(1),P(5)-bis(5'-adenosyl) pentaphosphate) are downstream effectors of a signaling cascade that regulates cardiac KATP channels, can also be substrates, although with lower preference than the diphosphoinositol polyphosphates. Can also catalyze the hydrolysis of 5-phosphoribose 1-diphosphate, generating the glycolytic activator ribose 1,5-bisphosphate. Does not play a role in U8 snoRNA decapping activity. Binds U8 snoRNA. The polypeptide is Diphosphoinositol polyphosphate phosphohydrolase 2 (Mus musculus (Mouse)).